The primary structure comprises 444 residues: Phosphoglucosamine mutase (444 aa).

The Phosphoserine intermediate role is filled by Ser100. Mg(2+)-binding residues include Ser100, Asp234, Asp236, and Asp238. Position 100 is a phosphoserine (Ser100).

The protein belongs to the phosphohexose mutase family. Mg(2+) is required as a cofactor. Post-translationally, activated by phosphorylation.

It carries out the reaction alpha-D-glucosamine 1-phosphate = D-glucosamine 6-phosphate. Its function is as follows. Catalyzes the conversion of glucosamine-6-phosphate to glucosamine-1-phosphate. The protein is Phosphoglucosamine mutase of Rubrobacter xylanophilus (strain DSM 9941 / JCM 11954 / NBRC 16129 / PRD-1).